Reading from the N-terminus, the 303-residue chain is Elongation factor Ts (303 aa).

Residues 80 to 83 form an involved in Mg(2+) ion dislocation from EF-Tu region; that stretch reads TDFV.

Belongs to the EF-Ts family.

It is found in the cytoplasm. Its function is as follows. Associates with the EF-Tu.GDP complex and induces the exchange of GDP to GTP. It remains bound to the aminoacyl-tRNA.EF-Tu.GTP complex up to the GTP hydrolysis stage on the ribosome. The sequence is that of Elongation factor Ts from Clostridium perfringens (strain SM101 / Type A).